Reading from the N-terminus, the 234-residue chain is Glucosamine-6-phosphate deaminase (234 aa).

The active-site Proton acceptor; for enolization step is D62. N128 (for ring-opening step) is an active-site residue. H130 functions as the Proton acceptor; for ring-opening step in the catalytic mechanism. E135 serves as the catalytic For ring-opening step.

It belongs to the glucosamine/galactosamine-6-phosphate isomerase family. NagB subfamily.

The catalysed reaction is alpha-D-glucosamine 6-phosphate + H2O = beta-D-fructose 6-phosphate + NH4(+). Its pathway is amino-sugar metabolism; N-acetylneuraminate degradation; D-fructose 6-phosphate from N-acetylneuraminate: step 5/5. Catalyzes the reversible isomerization-deamination of glucosamine 6-phosphate (GlcN6P) to form fructose 6-phosphate (Fru6P) and ammonium ion. This Lactobacillus delbrueckii subsp. bulgaricus (strain ATCC 11842 / DSM 20081 / BCRC 10696 / JCM 1002 / NBRC 13953 / NCIMB 11778 / NCTC 12712 / WDCM 00102 / Lb 14) protein is Glucosamine-6-phosphate deaminase.